The following is a 397-amino-acid chain: Cysteine desulfurase IscS (397 aa).

Residues G72–S73, N152, Q180, and S200–H202 each bind pyridoxal 5'-phosphate. K203 carries the post-translational modification N6-(pyridoxal phosphate)lysine. T238 is a binding site for pyridoxal 5'-phosphate. Residue C328 is the Cysteine persulfide intermediate of the active site. C328 serves as a coordination point for [2Fe-2S] cluster.

It belongs to the class-V pyridoxal-phosphate-dependent aminotransferase family. NifS/IscS subfamily. Homodimer. Forms a heterotetramer with IscU, interacts with other sulfur acceptors. It depends on pyridoxal 5'-phosphate as a cofactor.

The protein localises to the cytoplasm. The catalysed reaction is (sulfur carrier)-H + L-cysteine = (sulfur carrier)-SH + L-alanine. The protein operates within cofactor biosynthesis; iron-sulfur cluster biosynthesis. Its function is as follows. Master enzyme that delivers sulfur to a number of partners involved in Fe-S cluster assembly, tRNA modification or cofactor biosynthesis. Catalyzes the removal of elemental sulfur atoms from cysteine to produce alanine. Functions as a sulfur delivery protein for Fe-S cluster synthesis onto IscU, an Fe-S scaffold assembly protein, as well as other S acceptor proteins. The polypeptide is Cysteine desulfurase IscS (Clostridium botulinum (strain ATCC 19397 / Type A)).